The chain runs to 153 residues: 3-hydroxyacyl-[acyl-carrier-protein] dehydratase FabZ (153 aa).

His54 is an active-site residue.

It belongs to the thioester dehydratase family. FabZ subfamily.

Its subcellular location is the cytoplasm. The enzyme catalyses a (3R)-hydroxyacyl-[ACP] = a (2E)-enoyl-[ACP] + H2O. Functionally, involved in unsaturated fatty acids biosynthesis. Catalyzes the dehydration of short chain beta-hydroxyacyl-ACPs and long chain saturated and unsaturated beta-hydroxyacyl-ACPs. This Shewanella sediminis (strain HAW-EB3) protein is 3-hydroxyacyl-[acyl-carrier-protein] dehydratase FabZ.